Consider the following 234-residue polypeptide: Large ribosomal subunit protein uL1 (234 aa).

The protein belongs to the universal ribosomal protein uL1 family. As to quaternary structure, part of the 50S ribosomal subunit.

In terms of biological role, binds directly to 23S rRNA. The L1 stalk is quite mobile in the ribosome, and is involved in E site tRNA release. Protein L1 is also a translational repressor protein, it controls the translation of the L11 operon by binding to its mRNA. The chain is Large ribosomal subunit protein uL1 from Corynebacterium aurimucosum (strain ATCC 700975 / DSM 44827 / CIP 107346 / CN-1) (Corynebacterium nigricans).